The chain runs to 177 residues: Large ribosomal subunit protein uL6 (177 aa).

It belongs to the universal ribosomal protein uL6 family. In terms of assembly, part of the 50S ribosomal subunit.

This protein binds to the 23S rRNA, and is important in its secondary structure. It is located near the subunit interface in the base of the L7/L12 stalk, and near the tRNA binding site of the peptidyltransferase center. The chain is Large ribosomal subunit protein uL6 from Hydrogenovibrio crunogenus (strain DSM 25203 / XCL-2) (Thiomicrospira crunogena).